The primary structure comprises 188 residues: F7-2 fimbrial protein (188 aa).

Positions 1 to 21 (MIKSVIAGAVAMAVVSFGAYA) are cleaved as a signal peptide. Cysteines 43 and 82 form a disulfide.

This sequence belongs to the fimbrial protein family.

Its subcellular location is the fimbrium. Its function is as follows. Fimbriae (also called pili), polar filaments radiating from the surface of the bacterium to a length of 0.5-1.5 micrometers and numbering 100-300 per cell, enable bacteria to colonize the epithelium of specific host organs. The chain is F7-2 fimbrial protein (F7-2) from Escherichia coli O6:H1 (strain CFT073 / ATCC 700928 / UPEC).